The chain runs to 177 residues: Nucleoside triphosphate/diphosphate phosphatase (177 aa).

Arg23 acts as the Proton donor in catalysis. Mg(2+) contacts are provided by Asn87, Asp103, Asp105, Asp107, Asp120, and Glu123.

The protein belongs to the Ntdp family. It depends on Mg(2+) as a cofactor.

The catalysed reaction is a ribonucleoside 5'-triphosphate + H2O = a ribonucleoside 5'-diphosphate + phosphate + H(+). It carries out the reaction a ribonucleoside 5'-diphosphate + H2O = a ribonucleoside 5'-phosphate + phosphate + H(+). Its function is as follows. Has nucleoside phosphatase activity towards nucleoside triphosphates and nucleoside diphosphates. This Streptococcus agalactiae serotype Ia (strain ATCC 27591 / A909 / CDC SS700) protein is Nucleoside triphosphate/diphosphate phosphatase.